Consider the following 459-residue polypeptide: Heat stress transcription factor A-4d (459 aa).

A coiled-coil region spans residues 127-189; it reads AESERRELEE…QKNIVASLCE (63 aa). Positions 141–191 are hydrophobic repeat HR-A/B; the sequence is LKYEKSILVADLQRQNQQQYVINWQMQAMEGRLVAMEQRQKNIVASLCEML. Residues 209 to 213 carry the Nuclear localization signal motif; it reads SKKRR. Positions 364–388 are enriched in polar residues; sequence YPTQADVNSEIASSTDTSQDGTSET. Residues 364-398 are disordered; that stretch reads YPTQADVNSEIASSTDTSQDGTSETEASHGPTNDV. Residues 397 to 406 carry the AHA motif; that stretch reads DVFWERFLTE.

Belongs to the HSF family. Class A subfamily. In terms of assembly, homotrimer. Exhibits temperature-dependent phosphorylation.

Its subcellular location is the nucleus. Its function is as follows. Transcriptional regulator that specifically binds DNA of heat shock promoter elements (HSE). In Oryza sativa subsp. japonica (Rice), this protein is Heat stress transcription factor A-4d (HSFA4D).